The sequence spans 161 residues: Fatty acid-binding protein homolog 2 (161 aa).

Positions 1 to 19 (MSSKFLILLAFCGATLVAA) are cleaved as a signal peptide.

It belongs to the calycin superfamily. Fatty-acid binding protein (FABP) family.

The protein resides in the secreted. Functionally, may play a role in sequestering potentially toxic fatty acids and their peroxidation products, or it may be involved in the maintenance of the impermeable lipid layer of the eggshell. The protein is Fatty acid-binding protein homolog 2 (lbp-2) of Caenorhabditis elegans.